Reading from the N-terminus, the 148-residue chain is Large ribosomal subunit protein bL9 (148 aa).

Belongs to the bacterial ribosomal protein bL9 family.

Its function is as follows. Binds to the 23S rRNA. This chain is Large ribosomal subunit protein bL9, found in Methylococcus capsulatus (strain ATCC 33009 / NCIMB 11132 / Bath).